The chain runs to 403 residues: Serine/threonine transporter SstT (403 aa).

Helical transmembrane passes span 16–36 (QIVIGLIAGIALALLAPAIAL), 45–65 (FVSALKAVAPVLVFILVMASI), 79–99 (ILWLYLLGTFSAAVVAVVASM), 138–158 (ALLNANFIGVLTWAIGLGVAL), 175–195 (GVTLIVRVVIRFAPLGIFGLV), 214–234 (LAVLIGCMLFVALVMNPLIVF), 295–315 (MAGAAITITVLTLAAVHTLGI), 327–347 (MVAAVCACGASGVAGGSLLLI), and 353–373 (LFGIPSEIAMQVVAVGFIIGV).

It belongs to the dicarboxylate/amino acid:cation symporter (DAACS) (TC 2.A.23) family.

The protein localises to the cell inner membrane. It carries out the reaction L-serine(in) + Na(+)(in) = L-serine(out) + Na(+)(out). The catalysed reaction is L-threonine(in) + Na(+)(in) = L-threonine(out) + Na(+)(out). In terms of biological role, involved in the import of serine and threonine into the cell, with the concomitant import of sodium (symport system). The chain is Serine/threonine transporter SstT from Pseudomonas putida (strain W619).